Consider the following 380-residue polypeptide: Chaperone protein DnaJ (380 aa).

Positions 4–69 (DYYEILGVTR…QKRAAYDRFG (66 aa)) constitute a J domain. The CR-type zinc-finger motif lies at 135–213 (GKTAQINIPS…CQGTRRVEKN (79 aa)). Residues Cys148, Cys151, Cys165, Cys168, Cys187, Cys190, Cys201, and Cys204 each contribute to the Zn(2+) site. CXXCXGXG motif repeat units follow at residues 148 to 155 (CDSCEGSG), 165 to 172 (CGTCHGAG), 187 to 194 (CHACNGRG), and 201 to 208 (CPKCQGTR).

It belongs to the DnaJ family. As to quaternary structure, homodimer. Zn(2+) is required as a cofactor.

The protein resides in the cytoplasm. Participates actively in the response to hyperosmotic and heat shock by preventing the aggregation of stress-denatured proteins and by disaggregating proteins, also in an autonomous, DnaK-independent fashion. Unfolded proteins bind initially to DnaJ; upon interaction with the DnaJ-bound protein, DnaK hydrolyzes its bound ATP, resulting in the formation of a stable complex. GrpE releases ADP from DnaK; ATP binding to DnaK triggers the release of the substrate protein, thus completing the reaction cycle. Several rounds of ATP-dependent interactions between DnaJ, DnaK and GrpE are required for fully efficient folding. Also involved, together with DnaK and GrpE, in the DNA replication of plasmids through activation of initiation proteins. This chain is Chaperone protein DnaJ, found in Bartonella quintana (strain Toulouse) (Rochalimaea quintana).